Consider the following 2140-residue polypeptide: Dedicator of cytokinesis protein 7 (2140 aa).

Residues Ser30, Ser180, and Ser182 each carry the phosphoserine modification. Positions 138–183 are disordered; it reads FNPNTLDKQKERQKGLPKQVFESDEAPDGNSYQDDQDDLKRRSMSI. A coiled-coil region spans residues 365–395; sequence FKEADATKNKEKLEKLKSQADQFCQRLGKYR. Position 381 is an N6-methyllysine (Lys381). Thr450 bears the Phosphothreonine mark. The residue at position 452 (Ser452) is a Phosphoserine. The 167-residue stretch at 561-727 folds into the C2 DOCK-type domain; the sequence is RNLLYIYPQS…GVFNVEVVAV (167 aa). 7 positions are modified to phosphoserine: Ser862, Ser864, Ser882, Ser888, Ser896, Ser900, and Ser905. The segment covering 888 to 901 has biased composition (low complexity); sequence SLNLNRSRSLSNSN. The interval 888–971 is disordered; it reads SLNLNRSRSL…MSSHTETSSF (84 aa). Thr907 and Thr909 each carry phosphothreonine. Residues Ser910, Ser929, Ser964, Ser1383, Lys1390, Ala1394, Glu1398, Tyr1421, Ser1425, Arg1429, Ser1430, Ser1432, Ser1434, and Ser1438 each carry the phosphoserine modification. Residues 943 to 971 are compositionally biased toward polar residues; sequence SNPSPSAESTQAMDRSCNRMSSHTETSSF. In terms of domain architecture, DOCKER spans 1678 to 2114; it reads KGYQTSPDLR…LQPLINRKIP (437 aa). Lys1962 bears the N6-acetyllysine mark. The stretch at 2086 to 2112 forms a coiled coil; sequence DQKEYQRELERNYHRLKEALQPLINRK. Ser2129 carries the post-translational modification Phosphoserine.

Belongs to the DOCK family. Component of the DOCK7-induced septin displacement/DISP complex, at least composed of DOCK7, LRCH3 and MYO6. Interacts with TSC1. Interacts with nucleotide-free RAC1 and RAC3. Interacts with TACC3 and CRY1. Interacts with NOD2. As to expression, widely expressed.

It localises to the cell projection. The protein localises to the axon. Functions as a guanine nucleotide exchange factor (GEF), which activates Rac1 and Rac3 Rho small GTPases by exchanging bound GDP for free GTP. Does not have a GEF activity for CDC42. Required for STMN1 'Ser-15' phosphorylation during axon formation and consequently for neuronal polarization. As part of the DISP complex, may regulate the association of septins with actin and thereby regulate the actin cytoskeleton. Has a role in pigmentation. Involved in the regulation of cortical neurogenesis through the control of radial glial cells (RGCs) proliferation versus differentiation; negatively regulates the basal-to-apical interkinetic nuclear migration of RGCs by antagonizing the microtubule growth-promoting function of TACC3. This chain is Dedicator of cytokinesis protein 7 (DOCK7), found in Homo sapiens (Human).